The sequence spans 181 residues: MSSNINIVEAPEGVTGEGFFATKLNDVVGLARANSMWPLPFATSCCGIEFMATMASHYDLARFGSERVSFSPRQADMLMVMGTISKKMAPILRQVYEQMAEPRWVIAVGACASSGGIFDTYSVLQGIDKVIPVDVYVPGCPPRPEQIVDGVMRLQELVKSESVRRRSSPEYQELLASYNIK.

[4Fe-4S] cluster contacts are provided by cysteine 45, cysteine 46, cysteine 111, and cysteine 140.

The protein belongs to the complex I 20 kDa subunit family. NDH-1 is composed of 14 different subunits. Subunits NuoB, C, D, E, F, and G constitute the peripheral sector of the complex. It depends on [4Fe-4S] cluster as a cofactor.

The protein resides in the cell inner membrane. The catalysed reaction is a quinone + NADH + 5 H(+)(in) = a quinol + NAD(+) + 4 H(+)(out). In terms of biological role, NDH-1 shuttles electrons from NADH, via FMN and iron-sulfur (Fe-S) centers, to quinones in the respiratory chain. The immediate electron acceptor for the enzyme in this species is believed to be a menaquinone. Couples the redox reaction to proton translocation (for every two electrons transferred, four hydrogen ions are translocated across the cytoplasmic membrane), and thus conserves the redox energy in a proton gradient. In Flavobacterium psychrophilum (strain ATCC 49511 / DSM 21280 / CIP 103535 / JIP02/86), this protein is NADH-quinone oxidoreductase subunit B.